We begin with the raw amino-acid sequence, 601 residues long: MLNHPSQGSDDAQDEKQGDFPVIEEEKTQAVTLKDSYVSDDVANSTERYNLSPSPEDEDFEGPTEEEMQTLRHVGGKIPMRCWLIAIVELSERFSYYGLSAPFQNYMEYGPNDSPKGVLSLNSQGATGLSYFFQFWCYVTPVFGGYVADTFWGKYNTICCGTAIYIAGIFILFITSIPSVGNRDSAIGGFIAAIILIGIATGMIKANLSVLIADQLPKRKPSIKVLKSGERVIVDSNITLQNVFMFFYFMINVGSLSLMATTELEYHKGFWAAYLLPFCFFWIAVVTLIFGKKQYIQRPIGDKVIAKSFKVCWILTKNKFDFNAAKPSVHPEKNYPWNDKFVDEIKRALAACKVFIFYPIYWTQYGTMISSFITQASMMELHGIPNDFLQAFDSIALIIFIPIFEKFVYPFIRRYTPLKPITKIFFGFMFGSFAMTWAAVLQSFVYKAGPWYNEPLGHNTPNHVHVCWQIPAYVLISFSEIFASITGLEYAYSKAPASMKSFIMSIFLLTNAFGSAIGCALSPVTVDPKFTWLFTGLAVACFISGCLFWLCFRKYNDTEEEMNAMDYEEEDEFDLNPISAPKANDIEILEPMESLRSTTKY.

Residues Met-1 to Asp-10 show a composition bias toward polar residues. Positions Met-1–Glu-66 are disordered. The Extracellular segment spans residues Met-1 to Thr-150. Positions Asp-14–Thr-28 are enriched in basic and acidic residues. Residue Tyr-37 is modified to Phosphotyrosine. Phosphoserine occurs at positions 39 and 45. Over residues Val-42–Pro-53 the composition is skewed to polar residues. Positions Pro-55–Glu-66 are enriched in acidic residues. Residues Phe-151 to Leu-172 traverse the membrane as a helical segment. Topologically, residues Phe-173–Asn-182 are cytoplasmic. The helical transmembrane segment at Arg-183–Gly-202 threads the bilayer. The Extracellular portion of the chain corresponds to Met-203–Val-210. A helical membrane pass occupies residues Leu-211–Gly-229. Residues Glu-230–His-267 are Cytoplasmic-facing. The helical transmembrane segment at Lys-268 to Thr-287 threads the bilayer. The Extracellular segment spans residues Leu-288–Gln-294. Residues Tyr-295 to Thr-316 traverse the membrane as a helical segment. Residues Lys-317–Met-378 are Cytoplasmic-facing. A helical membrane pass occupies residues Met-379 to Ile-399. Over Phe-400 to Ile-412 the chain is Extracellular. Residues Arg-413–Met-429 form a helical membrane-spanning segment. The Cytoplasmic portion of the chain corresponds to Phe-430–Ala-448. The chain crosses the membrane as a helical span at residues Gly-449–Val-466. At Cys-467–Lys-494 the chain is on the extracellular side. A helical transmembrane segment spans residues Ala-495–Phe-513. Residues Gly-514 to Val-526 lie on the Cytoplasmic side of the membrane. The helical transmembrane segment at Asp-527–Leu-547 threads the bilayer. At Phe-548–Lys-554 the chain is on the extracellular side. The chain crosses the membrane as a helical span at residues Tyr-555–Pro-577. The Cytoplasmic portion of the chain corresponds to Ile-578–Tyr-601. Position 594 is a phosphoserine (Ser-594).

This sequence belongs to the major facilitator superfamily. Proton-dependent oligopeptide transporter (POT/PTR) (TC 2.A.17) family.

It localises to the membrane. Its function is as follows. Uptake of small peptides. This is Peptide transporter PTR2 (PTR2) from Saccharomyces cerevisiae (strain ATCC 204508 / S288c) (Baker's yeast).